A 378-amino-acid polypeptide reads, in one-letter code: Outer membrane protein (378 aa).

The N-terminal stretch at 1–22 (MRLRTALLATTLMAAAPVAANA) is a signal peptide. One can recognise an OmpA-like domain in the interval 258–378 (PPAPTPARTY…QNRRVEIILH (121 aa)).

The protein localises to the cell outer membrane. In terms of biological role, growth enhancer. The chain is Outer membrane protein from Gluconacetobacter diazotrophicus (strain ATCC 49037 / DSM 5601 / CCUG 37298 / CIP 103539 / LMG 7603 / PAl5).